We begin with the raw amino-acid sequence, 251 residues long: Fibroblast growth factor-binding protein 1 (251 aa).

The N-terminal stretch at 1–20 (MRLHSLILLSFLLLATQAFS) is a signal peptide. The tract at residues 25-62 (KRAKNAPHSTAEEGVEGSAPSLGKAQNKQRSRTSKSLT) is disordered. 3 cysteine pairs are disulfide-bonded: Cys-74-Cys-91, Cys-100-Cys-133, and Cys-109-Cys-145. A disordered region spans residues 160–189 (NARGNTKPRKEKAEVSAREHNKVQEAVSTE). Over residues 170-182 (EKAEVSAREHNKV) the composition is skewed to basic and acidic residues. Residue Ser-175 is glycosylated (O-linked (GalNAc...) serine). The segment at 210–251 (RDPECLEDPDVLNQRKTALEFCGESWSSICTFFLNMLQATSC) is sufficient for interaction with FGF2 and FGF2-induced effects. Intrachain disulfides connect Cys-214–Cys-251 and Cys-231–Cys-239.

Belongs to the fibroblast growth factor-binding protein family. As to quaternary structure, found in a complex with FGFBP1, FGF1 and FGF2. Interacts with FGF1, FGF7, FGF10, FGF22 and HSPG2. Interacts with FGF2. As to expression, expressed in intestine, ovary, lung, placenta and normal and wounded skin.

It localises to the secreted. It is found in the extracellular space. The protein resides in the cell membrane. Acts as a carrier protein that releases fibroblast-binding factors (FGFs) from the extracellular matrix (EM) storage and thus enhances the mitogenic activity of FGFs. Enhances FGF2 signaling during tissue repair, angiogenesis and in tumor growth. This chain is Fibroblast growth factor-binding protein 1 (Fgfbp1), found in Mus musculus (Mouse).